A 115-amino-acid polypeptide reads, in one-letter code: Hydrogenase maturation factor HypA (115 aa).

Residue His2 coordinates Ni(2+). Zn(2+)-binding residues include Cys74, Cys77, Cys90, and Cys93.

This sequence belongs to the HypA/HybF family.

Functionally, involved in the maturation of [NiFe] hydrogenases. Required for nickel insertion into the metal center of the hydrogenase. In Desulfosudis oleivorans (strain DSM 6200 / JCM 39069 / Hxd3) (Desulfococcus oleovorans), this protein is Hydrogenase maturation factor HypA.